Consider the following 205-residue polypeptide: Holliday junction branch migration complex subunit RuvA (205 aa).

The domain I stretch occupies residues 1 to 64 (MIGHIQGVLT…EDAQLLYGFI (64 aa)). The domain II stretch occupies residues 65–143 (SASERSLFRL…DWQPSTPFTD (79 aa)). A disordered region spans residues 136–157 (QPSTPFTDRAPLDSQGMDAREH). The flexible linker stretch occupies residues 144-156 (RAPLDSQGMDARE). The tract at residues 157 to 205 (HPADARTDAISALQSLGYKENQAEKALQKVYSAEHNSETLIRLALKQLS) is domain III.

It belongs to the RuvA family. In terms of assembly, homotetramer. Forms an RuvA(8)-RuvB(12)-Holliday junction (HJ) complex. HJ DNA is sandwiched between 2 RuvA tetramers; dsDNA enters through RuvA and exits via RuvB. An RuvB hexamer assembles on each DNA strand where it exits the tetramer. Each RuvB hexamer is contacted by two RuvA subunits (via domain III) on 2 adjacent RuvB subunits; this complex drives branch migration. In the full resolvosome a probable DNA-RuvA(4)-RuvB(12)-RuvC(2) complex forms which resolves the HJ.

The protein resides in the cytoplasm. Functionally, the RuvA-RuvB-RuvC complex processes Holliday junction (HJ) DNA during genetic recombination and DNA repair, while the RuvA-RuvB complex plays an important role in the rescue of blocked DNA replication forks via replication fork reversal (RFR). RuvA specifically binds to HJ cruciform DNA, conferring on it an open structure. The RuvB hexamer acts as an ATP-dependent pump, pulling dsDNA into and through the RuvAB complex. HJ branch migration allows RuvC to scan DNA until it finds its consensus sequence, where it cleaves and resolves the cruciform DNA. The polypeptide is Holliday junction branch migration complex subunit RuvA (Idiomarina loihiensis (strain ATCC BAA-735 / DSM 15497 / L2-TR)).